We begin with the raw amino-acid sequence, 181 residues long: Nedd8-conjugating enzyme UbcE2M (181 aa).

2 interaction with Uba3 regions span residues 4–7 (LFTL) and 24–54 (ASAA…PNDL). The 145-residue stretch at 26 to 170 (AAQLRIQKDI…VKKAMRGGCV (145 aa)) folds into the UBC core domain. Cysteine 108 serves as the catalytic Glycyl thioester intermediate.

The protein belongs to the ubiquitin-conjugating enzyme family. UBC12 subfamily. As to quaternary structure, interacts with Uba3. In terms of tissue distribution, expressed in the wing disk.

The enzyme catalyses [E1 NEDD8-activating enzyme]-S-[NEDD8 protein]-yl-L-cysteine + [E2 NEDD8-conjugating enzyme]-L-cysteine = [E1 NEDD8-activating enzyme]-L-cysteine + [E2 NEDD8-conjugating enzyme]-S-[NEDD8-protein]-yl-L-cysteine.. Its pathway is protein modification; protein neddylation. Accepts the ubiquitin-like protein Nedd8 from the Uba3-APP-BP1 E1 complex and catalyzes its covalent attachment to other proteins. Required for Cul1 and Cul3 neddylation. Negatively regulates full-length ci stability and hedgehog signaling. This chain is Nedd8-conjugating enzyme UbcE2M, found in Drosophila melanogaster (Fruit fly).